The chain runs to 318 residues: Peroxisomal targeting signal 2 receptor (318 aa).

6 WD repeats span residues 60-91 (DWND…QLWD), 104-136 (EHTQ…KVWD), 148-179 (GHES…RIWD), 191-222 (AHQT…RGWD), 235-266 (GHTY…RFWN), and 279-310 (HHTE…KIYD).

It belongs to the WD repeat peroxin-7 family. As to quaternary structure, interacts with PEX5; interaction only takes place when PEX7 is associated with cargo proteins. Interacts with VWA8.

The protein localises to the cytoplasm. It localises to the cytosol. It is found in the peroxisome matrix. Receptor required for the peroxisomal import of proteins containing a C-terminal PTS2-type peroxisomal targeting signal. Specifically binds to cargo proteins containing a PTS2 peroxisomal targeting signal in the cytosol. Cargo protein-binding triggers interaction with PEX5 and formation of a ternary complex composed of PEX5 and PEX7 along with PTS2-containing cargo proteins, which is tranlocated into peroxisomes by passing through the PEX13-PEX14 docking complex. The sequence is that of Peroxisomal targeting signal 2 receptor from Mus musculus (Mouse).